A 273-amino-acid chain; its full sequence is Putative phosphoenolpyruvate synthase regulatory protein (273 aa).

An ADP-binding site is contributed by 154–161 (GVSRSGKT).

The protein belongs to the pyruvate, phosphate/water dikinase regulatory protein family. PSRP subfamily.

It carries out the reaction [pyruvate, water dikinase] + ADP = [pyruvate, water dikinase]-phosphate + AMP + H(+). The enzyme catalyses [pyruvate, water dikinase]-phosphate + phosphate + H(+) = [pyruvate, water dikinase] + diphosphate. Its function is as follows. Bifunctional serine/threonine kinase and phosphorylase involved in the regulation of the phosphoenolpyruvate synthase (PEPS) by catalyzing its phosphorylation/dephosphorylation. This Neisseria meningitidis serogroup B (strain ATCC BAA-335 / MC58) protein is Putative phosphoenolpyruvate synthase regulatory protein.